The primary structure comprises 701 residues: Putative pectinesterase/pectinesterase inhibitor 43 (701 aa).

The signal sequence occupies residues 1-22; the sequence is MNKYVLLGVTALIMAMVICVEA. The pectinesterase inhibitor 43 stretch occupies residues 42–195; sequence MITKTTVSII…QHLTSNGLAI (154 aa). Low complexity-rich tracts occupy residues 221-256 and 263-275; these read GILG…VDSS and SSSE…SSNN. A disordered region spans residues 221–351; that stretch reads GILGSGSSRD…DPLRKLNPLN (131 aa). Asparagine 267 is a glycosylation site (N-linked (GlcNAc...) asparagine). Polar residues-rich tracts occupy residues 276–287 and 313–338; these read RPLDSSKNQQME and QKST…SSEN. Positions 391-688 are pectinesterase 43; sequence NVVVAKDGSG…FAPGNFLRGN (298 aa). Substrate contacts are provided by threonine 467 and glutamine 497. Aspartate 520 (proton donor; for pectinesterase activity) is an active-site residue. An intrachain disulfide couples cysteine 534 to cysteine 554. Catalysis depends on aspartate 541, which acts as the Nucleophile; for pectinesterase activity. Substrate contacts are provided by arginine 609 and tryptophan 611. Asparagine 637 is a glycosylation site (N-linked (GlcNAc...) asparagine).

In the N-terminal section; belongs to the PMEI family. This sequence in the C-terminal section; belongs to the pectinesterase family. In terms of tissue distribution, expressed in flower buds.

It is found in the secreted. It localises to the cell wall. It catalyses the reaction [(1-&gt;4)-alpha-D-galacturonosyl methyl ester](n) + n H2O = [(1-&gt;4)-alpha-D-galacturonosyl](n) + n methanol + n H(+). It functions in the pathway glycan metabolism; pectin degradation; 2-dehydro-3-deoxy-D-gluconate from pectin: step 1/5. Functionally, acts in the modification of cell walls via demethylesterification of cell wall pectin. This chain is Putative pectinesterase/pectinesterase inhibitor 43 (PME43), found in Arabidopsis thaliana (Mouse-ear cress).